The chain runs to 292 residues: MAAEAHAPTASEYIVHHLQHLQNIKQKSIVDFSVVNIDSVVVGLVLGAIALFAFWLCARKATSGVPGRFQAAVEILVEMVDNQAKANIHNAESRKFIAPLALTVFVWIFLMNAMDMLPVDLLPAIWAQIYGAAGHDPHHAYLRVVPTADLSTTLGLSTAVLVLCLYYSVKIKGLGGWAHELVTAPFGTSKNPVFALILGVVNLLMQIIEYVAKTVSHGMRLFGNMYAGELVFMLIALMGGAAAMSLSGVLLPVGHIIAGSIWAIFHILVITLQAFIFMMLALIYLGQAHEAH.

The next 6 membrane-spanning stretches (helical) occupy residues 37–57, 96–116, 144–164, 192–212, 230–250, and 263–283; these read IDSV…FWLC, FIAP…AMDM, VVPT…LVLC, PVFA…EYVA, LVFM…SGVL, and AIFH…LALI.

This sequence belongs to the ATPase A chain family. F-type ATPases have 2 components, CF(1) - the catalytic core - and CF(0) - the membrane proton channel. CF(1) has five subunits: alpha(3), beta(3), gamma(1), delta(1), epsilon(1). CF(0) has three main subunits: a(1), b(2) and c(9-12). The alpha and beta chains form an alternating ring which encloses part of the gamma chain. CF(1) is attached to CF(0) by a central stalk formed by the gamma and epsilon chains, while a peripheral stalk is formed by the delta and b chains.

It is found in the cell inner membrane. Functionally, key component of the proton channel; it plays a direct role in the translocation of protons across the membrane. This is ATP synthase subunit a from Paracidovorax citrulli (strain AAC00-1) (Acidovorax citrulli).